A 177-amino-acid chain; its full sequence is Peptidyl-tRNA hydrolase (177 aa).

Residue Tyr-14 coordinates tRNA. His-19 (proton acceptor) is an active-site residue. Residues Phe-64, Asn-66, and Asn-112 each contribute to the tRNA site.

The protein belongs to the PTH family. In terms of assembly, monomer.

The protein localises to the cytoplasm. The enzyme catalyses an N-acyl-L-alpha-aminoacyl-tRNA + H2O = an N-acyl-L-amino acid + a tRNA + H(+). Its function is as follows. Hydrolyzes ribosome-free peptidyl-tRNAs (with 1 or more amino acids incorporated), which drop off the ribosome during protein synthesis, or as a result of ribosome stalling. In terms of biological role, catalyzes the release of premature peptidyl moieties from peptidyl-tRNA molecules trapped in stalled 50S ribosomal subunits, and thus maintains levels of free tRNAs and 50S ribosomes. In Latilactobacillus sakei (Lactobacillus sakei), this protein is Peptidyl-tRNA hydrolase.